Consider the following 61-residue polypeptide: uncharacterized protein (61 aa).

The stretch at 24–60 (WMRYESERDEKLRMLERMRDELEAELEEIKREIERLR) forms a coiled coil.

This is an uncharacterized protein from Archaeoglobus fulgidus (strain ATCC 49558 / DSM 4304 / JCM 9628 / NBRC 100126 / VC-16).